Consider the following 617-residue polypeptide: Leucine aminopeptidase 2 (617 aa).

A peptide-binding positions include 139-141 and 271-276; these read QCQ and PYGGME. Histidine 300 contributes to the Zn(2+) binding site. The Proton acceptor role is filled by glutamate 301. Residues histidine 304 and glutamate 323 each contribute to the Zn(2+) site. Tyrosine 388 functions as the Proton donor in the catalytic mechanism.

Belongs to the peptidase M1 family. Zn(2+) is required as a cofactor.

The protein localises to the cytoplasm. It localises to the nucleus. It carries out the reaction an epoxide + H2O = an ethanediol. In terms of biological role, aminopeptidase that preferentially cleaves di- and tripeptides. Also has low epoxide hydrolase activity (in vitro). Can hydrolyze the epoxide leukotriene LTA(4) but it forms preferentially 5,6-dihydroxy-7,9,11,14-eicosatetraenoic acid rather than the cytokine leukotriene B(4) as the product compared to the homologous mammalian enzyme (in vitro). The polypeptide is Leucine aminopeptidase 2 (Aspergillus terreus (strain NIH 2624 / FGSC A1156)).